We begin with the raw amino-acid sequence, 214 residues long: Cytochrome b (214 aa).

4 consecutive transmembrane segments (helical) span residues 31-51, 75-96, 111-131, and 176-196; these read FGSM…FLAI, WIMQ…YIHI, WLSG…GYVL, and FFAL…IHII. 2 residues coordinate heme b: H81 and H95. Positions 180 and 194 each coordinate heme b. H199 provides a ligand contact to a ubiquinone.

The protein belongs to the cytochrome b family. As to quaternary structure, the cytochrome bc1 complex contains 3 respiratory subunits (MT-CYB, CYC1 and UQCRFS1), 2 core proteins (UQCRC1 and UQCRC2) and probably 6 low-molecular weight proteins. Heme b serves as cofactor.

Its subcellular location is the mitochondrion inner membrane. Component of the ubiquinol-cytochrome c reductase complex (complex III or cytochrome b-c1 complex) that is part of the mitochondrial respiratory chain. The b-c1 complex mediates electron transfer from ubiquinol to cytochrome c. Contributes to the generation of a proton gradient across the mitochondrial membrane that is then used for ATP synthesis. This Atractaspis micropholis (Mole viper) protein is Cytochrome b (MT-CYB).